The chain runs to 158 residues: Endoribonuclease YbeY (158 aa).

Positions 119, 123, and 129 each coordinate Zn(2+).

Belongs to the endoribonuclease YbeY family. The cofactor is Zn(2+).

The protein localises to the cytoplasm. Its function is as follows. Single strand-specific metallo-endoribonuclease involved in late-stage 70S ribosome quality control and in maturation of the 3' terminus of the 16S rRNA. In Shewanella woodyi (strain ATCC 51908 / MS32), this protein is Endoribonuclease YbeY.